We begin with the raw amino-acid sequence, 139 residues long: MKSRTILAFDFGTKSIGVAIGQEITGTARPLTSFKAQEGIPDWQKVEKLLSEWQPDLVVVGLPLNMDGTEQPLTARARKFANRLHGRFGVAIALHDERLSTVEARADLFERGGFKALDKGSVDAASAVIILESWFEAQH.

It belongs to the YqgF nuclease family.

The protein resides in the cytoplasm. Its function is as follows. Could be a nuclease involved in processing of the 5'-end of pre-16S rRNA. In Pectobacterium carotovorum subsp. carotovorum (strain PC1), this protein is Putative pre-16S rRNA nuclease.